The chain runs to 340 residues: Phosphate acyltransferase (340 aa).

Belongs to the PlsX family. Homodimer. Probably interacts with PlsY.

The protein localises to the cytoplasm. It catalyses the reaction a fatty acyl-[ACP] + phosphate = an acyl phosphate + holo-[ACP]. The protein operates within lipid metabolism; phospholipid metabolism. Its function is as follows. Catalyzes the reversible formation of acyl-phosphate (acyl-PO(4)) from acyl-[acyl-carrier-protein] (acyl-ACP). This enzyme utilizes acyl-ACP as fatty acyl donor, but not acyl-CoA. The sequence is that of Phosphate acyltransferase from Leptospira biflexa serovar Patoc (strain Patoc 1 / ATCC 23582 / Paris).